The primary structure comprises 286 residues: MSRYKKDNDGVTFLLVCIDIYSRRLFVKTLKSKKGQEVAEALQDVFKEIGVTPMTIYSDDGKEFYNSHVKELLAKNFVNLFSPKSEIKCAIVERANRTLKTRLAKYMTQKYNRRYVDVLQQVVNGINNSVNRGIGKKPVDVERGDFSTPMPVDSVKIKFRVGDHVRIAAKRGQFDKGYEQGWTTEVYMSNSTTTPTAHAPSEESIINGKSIPQPMLAGAIFGVIFGIFCLILHVCLVRYLVKARAKHIPKVRKVKAKKGKKDKKLKESKKSDDTSTGASTGSSIAM.

Positions 1-146 (MSRYKKDNDG…KPVDVERGDF (146 aa)) constitute an Integrase catalytic domain. Positions 252-263 (RKVKAKKGKKDK) are enriched in basic residues. The segment at 252–286 (RKVKAKKGKKDKKLKESKKSDDTSTGASTGSSIAM) is disordered. Residues 264–273 (KLKESKKSDD) show a composition bias toward basic and acidic residues. The segment covering 274–286 (TSTGASTGSSIAM) has biased composition (low complexity).

This is an uncharacterized protein from Caenorhabditis elegans.